The primary structure comprises 237 residues: Probable GTP-binding protein EngB (237 aa).

The EngB-type G domain maps to 13–188; the sequence is TGYEIAFAGR…ASVMAGRLNY (176 aa). Residues 21-28, 48-52, 67-70, 134-137, and 167-169 each bind GTP; these read GRSNAGKS, GRTQM, DLPG, TKAD, and FSS. Ser28 and Thr50 together coordinate Mg(2+). Acidic residues predominate over residues 207 to 220; the sequence is DDLNDELMDQDETS. A disordered region spans residues 207-237; that stretch reads DDLNDELMDQDETSEFNTENIDDHLDQEPKI. The span at 227–237 shows a compositional bias: basic and acidic residues; sequence IDDHLDQEPKI.

The protein belongs to the TRAFAC class TrmE-Era-EngA-EngB-Septin-like GTPase superfamily. EngB GTPase family. The cofactor is Mg(2+).

In terms of biological role, necessary for normal cell division and for the maintenance of normal septation. The sequence is that of Probable GTP-binding protein EngB from Acinetobacter baylyi (strain ATCC 33305 / BD413 / ADP1).